The sequence spans 427 residues: Endothelin-1 receptor (427 aa).

The first 20 residues, 1-20 (METFCFRVSFWVALLGCVIS), serve as a signal peptide directing secretion. Topologically, residues 21–80 (DNPESHSTNLSTHVDDFTTFRGTEFSLVVTTHRPTNLALPSNGSMHNYCPQQTKITSAFK) are extracellular. Asn29 and Asn62 each carry an N-linked (GlcNAc...) asparagine glycan. A helical membrane pass occupies residues 81–102 (YINTVISCTIFIVGMVGNATLL). The Cytoplasmic segment spans residues 103–112 (RIIYQNKCMR). Residues 113 to 132 (NGPNALIASLALGDLIYVVI) form a helical membrane-spanning segment. At 133–159 (DLPINVFKLLAGRWPFENHDFGVFLCK) the chain is on the extracellular side. The cysteines at positions 158 and 239 are disulfide-linked. A helical transmembrane segment spans residues 160 to 181 (LFPFLQKSSVGITVLNLCALSV). The Cytoplasmic portion of the chain corresponds to 182–205 (DRYRAVASWSRVQGIGIPLVTAIE). The chain crosses the membrane as a helical span at residues 206-229 (IVSIWILSFILAIPEAIGFVMVPF). Residues 230-256 (EYKGEEHKTCMLNATSKFMEFYQDVKD) lie on the Extracellular side of the membrane. Residues 257-278 (WWLFGFYFCMPLVCTAIFYTLM) traverse the membrane as a helical segment. At 279-306 (TCEMLNRRNGSLRIALSEHLKQRREVAK) the chain is on the cytoplasmic side. The chain crosses the membrane as a helical span at residues 307-328 (TVFCLVVIFALCWFPLHLSRIL). At 329-347 (KKTVYDEMDKNRCELLSFL) the chain is on the extracellular side. Residues 348 to 372 (LLMDYIGINLATMNSCINPIALYFV) form a helical membrane-spanning segment. Residues 373 to 427 (SKKFKNCFQSCLCCCCYQSKSLMTSVPMNGTSIQWKNHEQNNHNTERSSHKDSIN) are Cytoplasmic-facing. Ser425 is subject to Phosphoserine.

This sequence belongs to the G-protein coupled receptor 1 family. Endothelin receptor subfamily. EDNRA sub-subfamily. Interacts with HDAC7 and KAT5.

The protein resides in the cell membrane. Its function is as follows. Receptor for endothelin-1. Mediates its action by association with G proteins that activate a phosphatidylinositol-calcium second messenger system. The rank order of binding affinities for ET-A is: ET1 &gt; ET2 &gt;&gt; ET3. The sequence is that of Endothelin-1 receptor from Sus scrofa (Pig).